The primary structure comprises 152 residues: SsrA-binding protein (152 aa).

A disordered region spans residues 124–152 (KKLHDKRDTAAERDWQRDKARLMKGDRGD). Residues 128–152 (DKRDTAAERDWQRDKARLMKGDRGD) show a composition bias toward basic and acidic residues.

This sequence belongs to the SmpB family.

It is found in the cytoplasm. Required for rescue of stalled ribosomes mediated by trans-translation. Binds to transfer-messenger RNA (tmRNA), required for stable association of tmRNA with ribosomes. tmRNA and SmpB together mimic tRNA shape, replacing the anticodon stem-loop with SmpB. tmRNA is encoded by the ssrA gene; the 2 termini fold to resemble tRNA(Ala) and it encodes a 'tag peptide', a short internal open reading frame. During trans-translation Ala-aminoacylated tmRNA acts like a tRNA, entering the A-site of stalled ribosomes, displacing the stalled mRNA. The ribosome then switches to translate the ORF on the tmRNA; the nascent peptide is terminated with the 'tag peptide' encoded by the tmRNA and targeted for degradation. The ribosome is freed to recommence translation, which seems to be the essential function of trans-translation. This is SsrA-binding protein from Caulobacter vibrioides (strain ATCC 19089 / CIP 103742 / CB 15) (Caulobacter crescentus).